The primary structure comprises 1009 residues: Protein-tyrosine kinase 2-beta (1009 aa).

Residues 39 to 359 form the FERM domain; it reads RILKVCFYSN…GYCRLQGEHK (321 aa). Serine 361, serine 375, and serine 399 each carry phosphoserine. Tyrosine 402 is modified (phosphotyrosine; by autocatalysis). Positions 425–683 constitute a Protein kinase domain; sequence VVLNRILGEG…ELVCSLSDIY (259 aa). ATP is bound by residues 431-439, lysine 457, and 503-509; these read LGEGFFGEV and ELYPYGE. Catalysis depends on aspartate 549, which acts as the Proton acceptor. Tyrosine 579 carries the post-translational modification Phosphotyrosine. Position 580 is a phosphotyrosine; by SRC, FYN and LCK (tyrosine 580). A disordered region spans residues 696-728; sequence NARYRPPKILEPTTFQEPPPKPSRPKYRPPPQT. Residues 712–727 are compositionally biased toward pro residues; it reads EPPPKPSRPKYRPPPQ. A Phosphotyrosine modification is found at tyrosine 722. Serine 762 carries the post-translational modification Phosphoserine. At threonine 765 the chain carries Phosphothreonine. Residues 801–1009 form an interaction with TGFB1I1 region; the sequence is KIKMKQVLER…VANLAHPPAE (209 aa). Tyrosine 834 carries the phosphotyrosine modification. Serine 839 carries the post-translational modification Phosphoserine. At threonine 842 the chain carries Phosphothreonine. Tyrosine 849 bears the Phosphotyrosine mark. Serine 866 is modified (phosphoserine). The segment at 868–1009 is focal adhesion targeting (FAT); sequence QPTANLDRTD…VANLAHPPAE (142 aa). A Phosphotyrosine modification is found at tyrosine 881.

The protein belongs to the protein kinase superfamily. Tyr protein kinase family. FAK subfamily. Homodimer, or homooligomer. Interacts with KCNA2. Interacts with NPHP1, ASAP1, ASAP2, ARHGAP26, SKAP2 and TGFB1I1. The Tyr-402 phosphorylated form interacts with SRC (via SH2 domain) and SRC family members. Forms a signaling complex with EPHA1, LCK and phosphatidylinositol 3-kinase; upon activation by EFNA1. Interacts with GRB2 (via SH2 domain). Interacts with P53/TP53 and MDM2. Interacts with MYLK. Interacts with BCAR1. Interacts with RB1CC1. Interacts with RHOU. Interacts with VAV1. Interacts with PDPK1. Interacts with DLG4. Interacts with LPXN and PTPN12. Interacts with SIRPA and SH2D3C. Interacts (hypophosphorylated) with PXN. Interacts with ARHGAP10. In terms of processing, phosphorylated on tyrosine residues in response to various stimuli that elevate the intracellular calcium concentration; this activation is indirect and may be mediated by production of reactive oxygen species (ROS). Tyr-402 is the major autophosphorylation site, but other kinases can also phosphorylate Tyr-402. Autophosphorylation occurs in trans, i.e. one subunit of the dimeric receptor phosphorylates tyrosine residues on the other subunit. Phosphorylation at Tyr-402 promotes interaction with SRC and SRC family members, leading to phosphorylation at Tyr-579; Tyr-580 and Tyr-881. Phosphorylation at Tyr-881 is important for interaction with GRB2. Phosphorylated on tyrosine residues upon activation of FGR and PKC. Recruitment by NPHP1 to cell matrix adhesions initiates Tyr-402 phosphorylation. In monocytes, adherence to substrata is required for tyrosine phosphorylation and kinase activation. Angiotensin II, thapsigargin and L-alpha-lysophosphatidic acid (LPA) also induce autophosphorylation and increase kinase activity. Phosphorylation by MYLK promotes ITGB2 activation and is thus essential to trigger neutrophil transmigration during lung injury. Dephosphorylated by PTPN12.

It is found in the cytoplasm. It localises to the perinuclear region. Its subcellular location is the cell membrane. The protein localises to the cell junction. The protein resides in the focal adhesion. It is found in the cell projection. It localises to the lamellipodium. Its subcellular location is the cell cortex. The protein localises to the nucleus. The catalysed reaction is L-tyrosyl-[protein] + ATP = O-phospho-L-tyrosyl-[protein] + ADP + H(+). Its activity is regulated as follows. Activated in response to stimuli that lead to increased intracellular Ca(2+) levels; this activation is indirect and may be mediated by calcium-mediated production of reactive oxygen species (ROS). Activated by autophosphorylation at Tyr-402; this creates a binding site for SRC family kinases and leads to phosphorylation at additional tyrosine residues. Phosphorylation at Tyr-402, Tyr-579 and Tyr-580 is required for optimal kinase activity. Non-receptor protein-tyrosine kinase that regulates reorganization of the actin cytoskeleton, cell polarization, cell migration, adhesion, spreading and bone remodeling. Plays a role in the regulation of the humoral immune response, and is required for normal levels of marginal B-cells in the spleen and normal migration of splenic B-cells. Required for normal macrophage polarization and migration towards sites of inflammation. Regulates cytoskeleton rearrangement and cell spreading in T-cells, and contributes to the regulation of T-cell responses. Promotes osteoclastic bone resorption; this requires both PTK2B/PYK2 and SRC. May inhibit differentiation and activity of osteoprogenitor cells. Functions in signaling downstream of integrin and collagen receptors, immune receptors, G-protein coupled receptors (GPCR), cytokine, chemokine and growth factor receptors, and mediates responses to cellular stress. Forms multisubunit signaling complexes with SRC and SRC family members upon activation; this leads to the phosphorylation of additional tyrosine residues, creating binding sites for scaffold proteins, effectors and substrates. Regulates numerous signaling pathways. Promotes activation of phosphatidylinositol 3-kinase and of the AKT1 signaling cascade. Promotes activation of NOS3. Regulates production of the cellular messenger cGMP. Promotes activation of the MAP kinase signaling cascade, including activation of MAPK1/ERK2, MAPK3/ERK1 and MAPK8/JNK1. Promotes activation of Rho family GTPases, such as RHOA and RAC1. Recruits the ubiquitin ligase MDM2 to P53/TP53 in the nucleus, and thereby regulates P53/TP53 activity, P53/TP53 ubiquitination and proteasomal degradation. Acts as a scaffold, binding to both PDPK1 and SRC, thereby allowing SRC to phosphorylate PDPK1 at 'Tyr-9, 'Tyr-373', and 'Tyr-376'. Promotes phosphorylation of NMDA receptors by SRC family members, and thereby contributes to the regulation of NMDA receptor ion channel activity and intracellular Ca(2+) levels. May also regulate potassium ion transport by phosphorylation of potassium channel subunits. Phosphorylates SRC; this increases SRC kinase activity. Phosphorylates ASAP1, NPHP1, KCNA2 and SHC1. Promotes phosphorylation of ASAP2, RHOU and PXN; this requires both SRC and PTK2/PYK2. This chain is Protein-tyrosine kinase 2-beta (Ptk2b), found in Mus musculus (Mouse).